Consider the following 135-residue polypeptide: Flagellar assembly factor FliW 1 (135 aa).

It belongs to the FliW family. As to quaternary structure, interacts with translational regulator CsrA and flagellin(s).

Its subcellular location is the cytoplasm. Acts as an anti-CsrA protein, binds CsrA and prevents it from repressing translation of its target genes, one of which is flagellin. Binds to flagellin and participates in the assembly of the flagellum. This Helicobacter pylori (strain HPAG1) protein is Flagellar assembly factor FliW 1.